A 209-amino-acid polypeptide reads, in one-letter code: Dof zinc finger protein DOF1.6 (209 aa).

Polar residues predominate over residues Met1 to Thr17. Residues Met1–Leu29 form a disordered region. The segment covering Tyr20–Leu29 has biased composition (pro residues). The Dof-type zinc finger occupies Leu29 to Ser83. Residues Cys31, Cys34, Cys56, and Cys59 each contribute to the Zn(2+) site. A disordered region spans residues Arg70 to Ser116. Residues Phe89–Ser116 show a composition bias toward low complexity.

The protein localises to the nucleus. In terms of biological role, transcription factor that binds specifically to a 5'-AA[AG]G-3' consensus core sequence. The polypeptide is Dof zinc finger protein DOF1.6 (DOF1.6) (Arabidopsis thaliana (Mouse-ear cress)).